We begin with the raw amino-acid sequence, 274 residues long: MPKTIKLTKTIALKSKPLTKTKIKIIENTIESYKEVLSIALDFGLKNNRKSHRKIREGIYEEIKSKLPKLPTHYIYTASQDASTRIKSFIAMKKRDKAYTSKPKIKNISLWLDDVLTNYRDFKNNIEKLFLIDKEGKKTLHLRLSTPNGRIVIPLKPHKQFFKLLNEGWGIKAGFKLRLNKEDGTITVLIPLEKEITINDSYKTVYALDFNLDNITYGNFENIELIKTDLGKLTEKYSNIMTNIQEKFSFKGIHKQDKPLKRKGFILLKNSVGG.

This is an uncharacterized protein from Methanocaldococcus jannaschii (strain ATCC 43067 / DSM 2661 / JAL-1 / JCM 10045 / NBRC 100440) (Methanococcus jannaschii).